The primary structure comprises 88 residues: Small ribosomal subunit protein bS20 (88 aa).

This sequence belongs to the bacterial ribosomal protein bS20 family.

Binds directly to 16S ribosomal RNA. In Syntrophomonas wolfei subsp. wolfei (strain DSM 2245B / Goettingen), this protein is Small ribosomal subunit protein bS20.